The chain runs to 111 residues: UPF0122 protein YofM (111 aa).

This sequence belongs to the UPF0122 family.

Might take part in the signal recognition particle (SRP) pathway. This is inferred from the conservation of its genetic proximity to ftsY/ffh. May be a regulatory protein. In Lactococcus lactis subsp. lactis (strain IL1403) (Streptococcus lactis), this protein is UPF0122 protein YofM (yofM).